The sequence spans 92 residues: Small ribosomal subunit protein uS19 (92 aa).

It belongs to the universal ribosomal protein uS19 family.

Functionally, protein S19 forms a complex with S13 that binds strongly to the 16S ribosomal RNA. This Xanthobacter autotrophicus (strain ATCC BAA-1158 / Py2) protein is Small ribosomal subunit protein uS19.